The chain runs to 111 residues: Large ribosomal subunit protein uL22 (111 aa).

Belongs to the universal ribosomal protein uL22 family. In terms of assembly, part of the 50S ribosomal subunit.

This protein binds specifically to 23S rRNA; its binding is stimulated by other ribosomal proteins, e.g. L4, L17, and L20. It is important during the early stages of 50S assembly. It makes multiple contacts with different domains of the 23S rRNA in the assembled 50S subunit and ribosome. In terms of biological role, the globular domain of the protein is located near the polypeptide exit tunnel on the outside of the subunit, while an extended beta-hairpin is found that lines the wall of the exit tunnel in the center of the 70S ribosome. This is Large ribosomal subunit protein uL22 from Chlamydia abortus (strain DSM 27085 / S26/3) (Chlamydophila abortus).